A 397-amino-acid chain; its full sequence is Acetate kinase (397 aa).

N8 is a Mg(2+) binding site. K15 serves as a coordination point for ATP. R89 contributes to the substrate binding site. D146 acts as the Proton donor/acceptor in catalysis. ATP is bound by residues 206 to 210, 281 to 283, and 329 to 333; these read HLGNG, DLR, and GVGEN. Residue E382 coordinates Mg(2+).

It belongs to the acetokinase family. Homodimer. Mg(2+) serves as cofactor. The cofactor is Mn(2+).

The protein localises to the cytoplasm. It carries out the reaction acetate + ATP = acetyl phosphate + ADP. Its pathway is metabolic intermediate biosynthesis; acetyl-CoA biosynthesis; acetyl-CoA from acetate: step 1/2. In terms of biological role, catalyzes the formation of acetyl phosphate from acetate and ATP. Can also catalyze the reverse reaction. The polypeptide is Acetate kinase (Bacillus anthracis).